We begin with the raw amino-acid sequence, 248 residues long: UPF0246 protein RF_0769 (248 aa).

The protein belongs to the UPF0246 family.

This chain is UPF0246 protein RF_0769, found in Rickettsia felis (strain ATCC VR-1525 / URRWXCal2) (Rickettsia azadi).